The chain runs to 132 residues: Small ribosomal subunit protein uS9 (132 aa).

The protein belongs to the universal ribosomal protein uS9 family.

This chain is Small ribosomal subunit protein uS9, found in Methanothrix thermoacetophila (strain DSM 6194 / JCM 14653 / NBRC 101360 / PT) (Methanosaeta thermophila).